The chain runs to 414 residues: Eukaryotic initiation factor 4A-3 (414 aa).

Ala-2 bears the N-acetylalanine mark. The Q motif signature appears at 41–69 (DSFDAMELQPDLLRGIYAYGFEKPSAIQQ). The Helicase ATP-binding domain occupies 72–242 (IIPFCKGLDV…RKFMNKPVRI (171 aa)). ATP is bound at residue 85–92 (AQSGTGKT). Ser-106 carries the phosphoserine modification. Thr-147 is modified (phosphothreonine). The short motif at 190 to 193 (DEAD) is the DEAD box element. The 162-residue stretch at 253-414 (GIKQFYVNVD…ELPSNVADLL (162 aa)) folds into the Helicase C-terminal domain.

The protein belongs to the DEAD box helicase family. eIF4A subfamily. As to quaternary structure, eIF4F is a multi-subunit complex, the composition of which varies with external and internal environmental conditions. It is composed of at least EIF4A, EIF4E and EIF4G.

The protein localises to the cytoplasm. It carries out the reaction ATP + H2O = ADP + phosphate + H(+). ATP-dependent RNA helicase which is a subunit of the eIF4F complex involved in cap recognition and is required for mRNA binding to ribosome. In the current model of translation initiation, eIF4A unwinds RNA secondary structures in the 5'-UTR of mRNAs which is necessary to allow efficient binding of the small ribosomal subunit, and subsequent scanning for the initiator codon. The chain is Eukaryotic initiation factor 4A-3 (TIF4A-3) from Arabidopsis thaliana (Mouse-ear cress).